The sequence spans 84 residues: Peptide Ctry2346 (84 aa).

Positions 1-23 are cleaved as a signal peptide; the sequence is MKTQTLLFTFSLVLLMVATQTEA. At leucine 33 the chain carries Leucine amide. The propeptide occupies 37 to 84; sequence GLLDNLLGKRGLLFGKRALTNQDLFDLAYDPSLSAADMDALEMLLENY.

It belongs to the non-disulfide-bridged peptide (NDBP) superfamily. Short antimicrobial peptide (group 4) family. Expressed by the venom gland.

Its subcellular location is the secreted. The protein resides in the target cell membrane. In terms of biological role, antimicrobial peptide. The protein is Peptide Ctry2346 of Chaerilus tryznai (Scorpion).